The following is an 85-amino-acid chain: uncharacterized protein (85 aa).

Serine 22 is modified (phosphoserine).

The protein resides in the cytoplasm. Its subcellular location is the nucleus. This is an uncharacterized protein from Saccharomyces cerevisiae (strain ATCC 204508 / S288c) (Baker's yeast).